Reading from the N-terminus, the 267-residue chain is MSIVSYEPKVSDFLNLSKKEEILPKALTRLKTVSISTKDIISVKESETLCDIDLLINVPLDKYRYVGILGAVFTGEWLVPDFVKGGVTISVIDKRLVNSKECVIGTYRAAAKSKRFQFKLVPNYFVSTVDAKRKPWQVHVRIQDLKIEAGWQPLALEVVSVAMVTNNVVMKGLREKVVAINDPDVEGFEGVVDEFVDSVAAFKAVDNFRKRKKKVEERDVVSKYKYRPEKYAGPDSFNLKEENVLQHYKPESVPVLRSGVGRAHTNA.

It belongs to the tobamovirus movement protein family.

It is found in the host cytoplasm. The protein localises to the host cytoskeleton. It localises to the host cell junction. Its subcellular location is the host plasmodesma. Transports viral genome to neighboring plant cells directly through plasmosdesmata, without any budding. The movement protein allows efficient cell to cell propagation, by bypassing the host cell wall barrier. Forms a ribonucleoprotein complex with viral RNA. Binds microtubules and modulates microtubule stability. Can bind double-stranded DNA. In Brassicaceae (TVCV), this protein is Movement protein (MP).